Reading from the N-terminus, the 1021-residue chain is DNA-directed RNA polymerase 2B, chloroplastic/mitochondrial (1021 aa).

The interval 315–337 (KKQKAEKDKQKEDGEHVTQEQEK) is disordered. Residues D722, K797, and D954 contribute to the active site.

The protein belongs to the phage and mitochondrial RNA polymerase family.

The protein localises to the plastid. It is found in the chloroplast. The protein resides in the mitochondrion. It carries out the reaction RNA(n) + a ribonucleoside 5'-triphosphate = RNA(n+1) + diphosphate. DNA-dependent RNA polymerase catalyzes the transcription of DNA into RNA using the four ribonucleoside triphosphates as substrates. The polypeptide is DNA-directed RNA polymerase 2B, chloroplastic/mitochondrial (RPOT2-TOM) (Nicotiana tabacum (Common tobacco)).